We begin with the raw amino-acid sequence, 311 residues long: Methionyl-tRNA formyltransferase (311 aa).

Residue 110–113 (SLLP) coordinates (6S)-5,6,7,8-tetrahydrofolate.

Belongs to the Fmt family.

The catalysed reaction is L-methionyl-tRNA(fMet) + (6R)-10-formyltetrahydrofolate = N-formyl-L-methionyl-tRNA(fMet) + (6S)-5,6,7,8-tetrahydrofolate + H(+). Functionally, attaches a formyl group to the free amino group of methionyl-tRNA(fMet). The formyl group appears to play a dual role in the initiator identity of N-formylmethionyl-tRNA by promoting its recognition by IF2 and preventing the misappropriation of this tRNA by the elongation apparatus. The sequence is that of Methionyl-tRNA formyltransferase from Streptococcus pyogenes serotype M6 (strain ATCC BAA-946 / MGAS10394).